The chain runs to 74 residues: Small ribosomal subunit protein eS28 (74 aa).

This sequence belongs to the eukaryotic ribosomal protein eS28 family.

The chain is Small ribosomal subunit protein eS28 from Halobacterium salinarum (strain ATCC 29341 / DSM 671 / R1).